The following is a 279-amino-acid chain: Type III pantothenate kinase (279 aa).

Position 6–13 (6–13 (DIGNTLSK)) interacts with ATP. Residues Y92 and 99–102 (GVDR) contribute to the substrate site. D101 serves as the catalytic Proton acceptor. Position 120 (D120) interacts with K(+). S123 is an ATP binding site. T177 lines the substrate pocket.

Belongs to the type III pantothenate kinase family. Homodimer. It depends on NH4(+) as a cofactor. The cofactor is K(+).

It localises to the cytoplasm. It catalyses the reaction (R)-pantothenate + ATP = (R)-4'-phosphopantothenate + ADP + H(+). It functions in the pathway cofactor biosynthesis; coenzyme A biosynthesis; CoA from (R)-pantothenate: step 1/5. Its function is as follows. Catalyzes the phosphorylation of pantothenate (Pan), the first step in CoA biosynthesis. This is Type III pantothenate kinase from Chromohalobacter salexigens (strain ATCC BAA-138 / DSM 3043 / CIP 106854 / NCIMB 13768 / 1H11).